A 1353-amino-acid chain; its full sequence is Spike glycoprotein (1353 aa).

The first 13 residues, 1–13 (MFLILLISLPTAF), serve as a signal peptide directing secretion. Residues 14–1297 (AVIGDLKCTS…GTYEYYVKWP (1284 aa)) are Extracellular-facing. A BetaCoV S1-NTD domain is found at 15 to 302 (VIGDLKCTSD…DFMSEIKCKT (288 aa)). 5 disulfides stabilise this stretch: Cys21/Cys169, Cys164/Cys197, Cys176/Cys256, Cys290/Cys300, and Cys335/Cys360. N-linked (GlcNAc...) asparagine; by host glycans are attached at residues Asn59, Asn133, and Asn146. N-linked (GlcNAc...) asparagine; by host glycosylation is present at Asn202. In terms of domain architecture, BetaCoV S1-CTD spans 333-607 (PNCNIEAWLN…DVNSGLTCST (275 aa)). Asn363 carries N-linked (GlcNAc...) asparagine; by host glycosylation. 2 disulfides stabilise this stretch: Cys378/Cys431 and Cys390/Cys605. Asn441, Asn496, Asn639, Asn666, Asn686, Asn704, Asn729, and Asn778 each carry an N-linked (GlcNAc...) asparagine; by host glycan. Fusion peptide regions lie at residues 904–925 (SAIEDLLFDKVKLSDVGFVEAY) and 923–943 (EAYNNCTGGAEIRDLICVQSY). A glycan (N-linked (GlcNAc...) asparagine; by host) is linked at Asn927. The cysteines at positions 928 and 939 are disulfide-linked. The heptad repeat 1 stretch occupies residues 1004 to 1054 (QKLIANAFNNALYAIQEGFDATNSALVKIQAVVNANAEALNNLLQQLSNRF). Residues 1033–1077 (QAVVNANAEALNNLLQQLSNRFGAISASLQEILSRLDALEAEAQI) adopt a coiled-coil conformation. 6 N-linked (GlcNAc...) asparagine; by host glycosylation sites follow: Asn1184, Asn1214, Asn1224, Asn1243, Asn1257, and Asn1278. A heptad repeat 2 region spans residues 1248 to 1286 (APDLSLDYINVTFLDLQVEMNRLQEAIKVLNQSYINLKD). The stretch at 1259–1287 (TFLDLQVEMNRLQEAIKVLNQSYINLKDI) forms a coiled coil. The helical transmembrane segment at 1298–1318 (WYVWLLICLAGVAMLVLLFFI) threads the bilayer. Residues 1319 to 1353 (CCCTGCGTSCFKKCGGCCDDYTGYQELVIKTSHDD) are Cytoplasmic-facing. Residues 1349 to 1353 (TSHDD) carry the KxHxx motif.

It belongs to the betacoronaviruses spike protein family. Homotrimer; each monomer consists of a S1 and a S2 subunit. The resulting peplomers protrude from the virus surface as spikes. Post-translationally, specific enzymatic cleavages in vivo yield mature proteins. The precursor is processed into S1 and S2 by host cell furin or another cellular protease to yield the mature S1 and S2 proteins. Additionally, a second cleavage leads to the release of a fusion peptide after viral attachment to host cell receptor. In terms of processing, the cytoplasmic Cys-rich domain is palmitoylated. Spike glycoprotein is digested within host endosomes.

It is found in the virion membrane. The protein localises to the host endoplasmic reticulum-Golgi intermediate compartment membrane. It localises to the host cell membrane. In terms of biological role, S1 attaches the virion to the cell membrane by interacting with sialic acid-containing cell receptors, initiating the infection. Its function is as follows. Attaches the virion to the cell membrane by interacting with host receptor, initiating the infection. Functionally, mediates fusion of the virion and cellular membranes by acting as a class I viral fusion protein. Under the current model, the protein has at least three conformational states: pre-fusion native state, pre-hairpin intermediate state, and post-fusion hairpin state. During viral and target cell membrane fusion, the coiled coil regions (heptad repeats) assume a trimer-of-hairpins structure, positioning the fusion peptide in close proximity to the C-terminal region of the ectodomain. The formation of this structure appears to drive apposition and subsequent fusion of viral and target cell membranes. Acts as a viral fusion peptide which is unmasked following S2 cleavage occurring upon virus endocytosis. The chain is Spike glycoprotein from Homo sapiens (Human).